The chain runs to 361 residues: Polyribonucleotide 5'-hydroxyl-kinase MJ1315 (361 aa).

An ATP-binding site is contributed by 39–46; it reads GGVDSGKT.

A divalent metal cation serves as cofactor.

The catalysed reaction is a 5'-end dephospho-2'-deoxyribonucleoside-DNA + ATP = a 5'-end 5'-phospho-2'-deoxyribonucleoside-DNA + ADP + H(+). The enzyme catalyses a 5'-end dephospho-ribonucleoside-RNA + ATP = a 5'-end 5'-phospho-ribonucleoside-RNA + ADP + H(+). Functionally, polynucleotide kinase that can phosphorylate the 5'-hydroxyl groups of both single-stranded RNA (ssRNA) and single-stranded DNA (ssDNA). Exhibits a strong preference for ssRNA. In Methanocaldococcus jannaschii (strain ATCC 43067 / DSM 2661 / JAL-1 / JCM 10045 / NBRC 100440) (Methanococcus jannaschii), this protein is Polyribonucleotide 5'-hydroxyl-kinase MJ1315.